A 159-amino-acid chain; its full sequence is Protein-export protein SecB (159 aa).

The protein belongs to the SecB family. In terms of assembly, homotetramer, a dimer of dimers. One homotetramer interacts with 1 SecA dimer.

Its subcellular location is the cytoplasm. One of the proteins required for the normal export of preproteins out of the cell cytoplasm. It is a molecular chaperone that binds to a subset of precursor proteins, maintaining them in a translocation-competent state. It also specifically binds to its receptor SecA. The protein is Protein-export protein SecB of Rhizobium etli (strain CIAT 652).